A 375-amino-acid polypeptide reads, in one-letter code: Peptidyl-prolyl cis-trans isomerase D (375 aa).

One can recognise a PPIase cyclophilin-type domain in the interval 7 to 169; it reads YFDITIANEP…QEVTISSAGV (163 aa). 3 TPR repeats span residues 217–250, 270–307, and 312–345; these read AGKL…LDVH, LPLL…PNLS, and GKAL…VPGD.

This sequence belongs to the cyclophilin-type PPIase family. PPIase D subfamily.

The protein localises to the cytoplasm. It catalyses the reaction [protein]-peptidylproline (omega=180) = [protein]-peptidylproline (omega=0). Functionally, PPIases accelerate the folding of proteins. It catalyzes the cis-trans isomerization of proline imidic peptide bonds in oligopeptides. This is Peptidyl-prolyl cis-trans isomerase D (CPR6) from Cryptococcus neoformans var. neoformans serotype D (strain B-3501A) (Filobasidiella neoformans).